The sequence spans 290 residues: Acetyl-coenzyme A carboxylase carboxyl transferase subunit beta (290 aa).

Residues 27–290 (LWIKCPSCEA…LTRQPADAVA (264 aa)) form the CoA carboxyltransferase N-terminal domain. Positions 31, 34, 50, and 53 each coordinate Zn(2+). The segment at 31–53 (CPSCEAVLYRNDVEANLHVCPKC) adopts a C4-type zinc-finger fold.

Belongs to the AccD/PCCB family. In terms of assembly, acetyl-CoA carboxylase is a heterohexamer composed of biotin carboxyl carrier protein (AccB), biotin carboxylase (AccC) and two subunits each of ACCase subunit alpha (AccA) and ACCase subunit beta (AccD). Requires Zn(2+) as cofactor.

It localises to the cytoplasm. It catalyses the reaction N(6)-carboxybiotinyl-L-lysyl-[protein] + acetyl-CoA = N(6)-biotinyl-L-lysyl-[protein] + malonyl-CoA. It functions in the pathway lipid metabolism; malonyl-CoA biosynthesis; malonyl-CoA from acetyl-CoA: step 1/1. Functionally, component of the acetyl coenzyme A carboxylase (ACC) complex. Biotin carboxylase (BC) catalyzes the carboxylation of biotin on its carrier protein (BCCP) and then the CO(2) group is transferred by the transcarboxylase to acetyl-CoA to form malonyl-CoA. This Paraburkholderia phymatum (strain DSM 17167 / CIP 108236 / LMG 21445 / STM815) (Burkholderia phymatum) protein is Acetyl-coenzyme A carboxylase carboxyl transferase subunit beta.